Consider the following 1269-residue polypeptide: Protein cramped-like (1269 aa).

Residues Met1–Glu12 are compositionally biased toward gly residues. The interval Met1 to Ser165 is disordered. Basic and acidic residues-rich tracts occupy residues Asp13–Asp24 and Ser43–Pro52. Positions Pro59–Gly74 are enriched in pro residues. Residues Gly105–Ser123 show a composition bias toward gly residues. Low complexity predominate over residues Ser124–Gly147. Residues Gly151 to Ser165 show a composition bias toward basic and acidic residues. The region spanning Arg161–Thr224 is the SANT domain. Ser307 is modified (phosphoserine). 6 disordered regions span residues Ile450–Leu541, Asp581–Ala666, Val757–Asp827, Glu976–Gln1034, Ile1055–Glu1092, and Val1115–Ser1157. Residues Ser485–Asp507 show a composition bias toward low complexity. Composition is skewed to basic and acidic residues over residues Ala508–Asp518 and Thr526–Thr535. 3 stretches are compositionally biased toward polar residues: residues Val757–Thr767, Thr774–Leu806, and Ser982–His1002. 2 stretches are compositionally biased toward low complexity: residues Ile1055 to Pro1070 and Ser1125 to Pro1140. Residue Ser1268 is modified to Phosphoserine.

Belongs to the cramped family.

It localises to the nucleus. This chain is Protein cramped-like, found in Homo sapiens (Human).